Here is a 286-residue protein sequence, read N- to C-terminus: 4-diphosphocytidyl-2-C-methyl-D-erythritol kinase (286 aa).

The active site involves Lys-12. ATP is bound at residue 96 to 106 (PHGAGLGGGSA). Asp-138 is an active-site residue.

The protein belongs to the GHMP kinase family. IspE subfamily.

It carries out the reaction 4-CDP-2-C-methyl-D-erythritol + ATP = 4-CDP-2-C-methyl-D-erythritol 2-phosphate + ADP + H(+). It participates in isoprenoid biosynthesis; isopentenyl diphosphate biosynthesis via DXP pathway; isopentenyl diphosphate from 1-deoxy-D-xylulose 5-phosphate: step 3/6. Its function is as follows. Catalyzes the phosphorylation of the position 2 hydroxy group of 4-diphosphocytidyl-2C-methyl-D-erythritol. The protein is 4-diphosphocytidyl-2-C-methyl-D-erythritol kinase of Nitratidesulfovibrio vulgaris (strain ATCC 29579 / DSM 644 / CCUG 34227 / NCIMB 8303 / VKM B-1760 / Hildenborough) (Desulfovibrio vulgaris).